The following is a 464-amino-acid chain: Pup--protein ligase (464 aa).

Glu-14 lines the Mg(2+) pocket. Residue Arg-58 coordinates ATP. Position 60 (Tyr-60) interacts with Mg(2+). Residue Asp-62 is the Proton acceptor of the active site. Glu-68 is a binding site for Mg(2+). Positions 71 and 430 each coordinate ATP.

This sequence belongs to the Pup ligase/Pup deamidase family. Pup-conjugating enzyme subfamily.

The enzyme catalyses ATP + [prokaryotic ubiquitin-like protein]-L-glutamate + [protein]-L-lysine = ADP + phosphate + N(6)-([prokaryotic ubiquitin-like protein]-gamma-L-glutamyl)-[protein]-L-lysine.. Its pathway is protein degradation; proteasomal Pup-dependent pathway. It functions in the pathway protein modification; protein pupylation. Functionally, catalyzes the covalent attachment of the prokaryotic ubiquitin-like protein modifier Pup to the proteasomal substrate proteins, thereby targeting them for proteasomal degradation. This tagging system is termed pupylation. The ligation reaction involves the side-chain carboxylate of the C-terminal glutamate of Pup and the side-chain amino group of a substrate lysine. The sequence is that of Pup--protein ligase from Micrococcus luteus (strain ATCC 4698 / DSM 20030 / JCM 1464 / CCM 169 / CCUG 5858 / IAM 1056 / NBRC 3333 / NCIMB 9278 / NCTC 2665 / VKM Ac-2230) (Micrococcus lysodeikticus).